A 207-amino-acid polypeptide reads, in one-letter code: Imidazoleglycerol-phosphate dehydratase (207 aa).

Belongs to the imidazoleglycerol-phosphate dehydratase family.

It localises to the cytoplasm. It carries out the reaction D-erythro-1-(imidazol-4-yl)glycerol 3-phosphate = 3-(imidazol-4-yl)-2-oxopropyl phosphate + H2O. It functions in the pathway amino-acid biosynthesis; L-histidine biosynthesis; L-histidine from 5-phospho-alpha-D-ribose 1-diphosphate: step 6/9. The sequence is that of Imidazoleglycerol-phosphate dehydratase from Mycobacterium avium (strain 104).